The primary structure comprises 32 residues: DECFSPGTFCGIKPGLCCSARCLSFFCISLEF.

Cystine bridges form between Cys3-Cys18, Cys10-Cys22, and Cys17-Cys27. Residues Pro6 and Pro14 each carry the 4-hydroxyproline modification.

It belongs to the conotoxin O1 superfamily. As to expression, expressed by the venom duct.

The protein localises to the secreted. Functionally, delta-conotoxins bind to site 6 of voltage-gated sodium channels (Nav) and inhibit the inactivation process. This toxin acts on Nav1.2/SCN2A, Nav1.4/SCN4A, Nav1.5/SCN5A (weak activity), Nav1.6/SCN8A (EC(50)=2.5 uM). The protein is Delta-conotoxin-like CnVIC of Conus consors (Singed cone).